Here is a 204-residue protein sequence, read N- to C-terminus: Outer-membrane lipoprotein carrier protein (204 aa).

The N-terminal stretch at 1–21 is a signal peptide; it reads MKKYLNLTALLLVGISNVTWA.

It belongs to the LolA family. As to quaternary structure, monomer.

The protein resides in the periplasm. Its function is as follows. Participates in the translocation of lipoproteins from the inner membrane to the outer membrane. Only forms a complex with a lipoprotein if the residue after the N-terminal Cys is not an aspartate (The Asp acts as a targeting signal to indicate that the lipoprotein should stay in the inner membrane). In Histophilus somni (strain 2336) (Haemophilus somnus), this protein is Outer-membrane lipoprotein carrier protein.